The following is a 1061-amino-acid chain: RecBCD enzyme subunit RecC (1061 aa).

This sequence belongs to the RecC family. As to quaternary structure, heterotrimer of RecB, RecC and RecD. All subunits contribute to DNA-binding.

Functionally, a helicase/nuclease that prepares dsDNA breaks (DSB) for recombinational DNA repair. Binds to DSBs and unwinds DNA via a highly rapid and processive ATP-dependent bidirectional helicase activity. Unwinds dsDNA until it encounters a Chi (crossover hotspot instigator) sequence from the 3' direction. Cuts ssDNA a few nucleotides 3' to the Chi site. The properties and activities of the enzyme are changed at Chi. The Chi-altered holoenzyme produces a long 3'-ssDNA overhang and facilitates RecA-binding to the ssDNA for homologous DNA recombination and repair. Holoenzyme degrades any linearized DNA that is unable to undergo homologous recombination. In the holoenzyme this subunit recognizes the wild-type Chi sequence, and when added to isolated RecB increases its ATP-dependent helicase processivity. The polypeptide is RecBCD enzyme subunit RecC (Buchnera aphidicola subsp. Schizaphis graminum (strain Sg)).